We begin with the raw amino-acid sequence, 436 residues long: Prenyltransferase nscD (436 aa).

It belongs to the tryptophan dimethylallyltransferase family.

It participates in secondary metabolite biosynthesis. In terms of biological role, prenyltransferase; part of the gene cluster that mediates the biosynthesis of neosartoricin B, a prenylated anthracenone that probably exhibits T-cell antiproliferative activity, suggestive of a physiological role as an immunosuppressive agent. The non-reducing polyketide synthase nscA probably synthesizes and cyclizes the decaketide backbone. The hydrolase nscB then mediates the product release through hydrolysis followed by spontaneous decarboxylation. The prenyltransferase nscD catalyzes the addition of the dimethylallyl group to the aromatic C5. The FAD-dependent monooxygenase nscC is then responsible for the stereospecific hydroxylation at C2. Neosartoricin B can be converted into two additional compounds neosartoricins C and D. Neosartoricin C is a spirocyclic compound that is cyclized through the attack of C3 hydroxyl on C14, followed by dehydration. On the other hand, neosartoricin D is a further cyclized compound in which attack of C2 on C14 in neosartoricin C results in the formation of the acetal-containing dioxabicyclo-octanone ring. Both of these compounds are novel and possibly represent related metabolites of the gene cluster. The sequence is that of Prenyltransferase nscD from Trichophyton tonsurans (strain CBS 112818) (Scalp ringworm fungus).